The following is a 204-amino-acid chain: Lipid A acyltransferase PagP (204 aa).

An N-terminal signal peptide occupies residues 1-25; sequence MSYKHLISACIFSSLCLGQVNAVLA. Residues histidine 76, aspartate 119, and serine 120 contribute to the active site.

Belongs to the lipid A palmitoyltransferase family. Homodimer.

Its subcellular location is the cell outer membrane. The enzyme catalyses a lipid A + a 1,2-diacyl-sn-glycero-3-phosphocholine = a hepta-acyl lipid A + a 2-acyl-sn-glycero-3-phosphocholine. It catalyses the reaction a lipid IVA + a 1,2-diacyl-sn-glycero-3-phosphocholine = a lipid IVB + a 2-acyl-sn-glycero-3-phosphocholine. The catalysed reaction is a lipid IIA + a 1,2-diacyl-sn-glycero-3-phosphocholine = a lipid IIB + a 2-acyl-sn-glycero-3-phosphocholine. Its function is as follows. Transfers a fatty acid residue from the sn-1 position of a phospholipid to the N-linked hydroxyfatty acid chain on the proximal unit of lipid A or its precursors. This is Lipid A acyltransferase PagP from Yersinia enterocolitica serotype O:8 / biotype 1B (strain NCTC 13174 / 8081).